We begin with the raw amino-acid sequence, 154 residues long: Large ribosomal subunit protein uL22 (154 aa).

The protein belongs to the universal ribosomal protein uL22 family. In terms of assembly, part of the 50S ribosomal subunit.

This protein binds specifically to 23S rRNA. It makes multiple contacts with different domains of the 23S rRNA in the assembled 50S subunit and ribosome. Its function is as follows. The globular domain of the protein is located near the polypeptide exit tunnel on the outside of the subunit, while an extended beta-hairpin is found that lines the wall of the exit tunnel in the center of the 70S ribosome. This is Large ribosomal subunit protein uL22 from Methanosphaera stadtmanae (strain ATCC 43021 / DSM 3091 / JCM 11832 / MCB-3).